Reading from the N-terminus, the 420-residue chain is 4-hydroxy-3-methylbut-2-en-1-yl diphosphate synthase (flavodoxin) (420 aa).

Cys-307, Cys-310, Cys-353, and Glu-360 together coordinate [4Fe-4S] cluster.

Belongs to the IspG family. The cofactor is [4Fe-4S] cluster.

It catalyses the reaction (2E)-4-hydroxy-3-methylbut-2-enyl diphosphate + oxidized [flavodoxin] + H2O + 2 H(+) = 2-C-methyl-D-erythritol 2,4-cyclic diphosphate + reduced [flavodoxin]. The protein operates within isoprenoid biosynthesis; isopentenyl diphosphate biosynthesis via DXP pathway; isopentenyl diphosphate from 1-deoxy-D-xylulose 5-phosphate: step 5/6. Functionally, converts 2C-methyl-D-erythritol 2,4-cyclodiphosphate (ME-2,4cPP) into 1-hydroxy-2-methyl-2-(E)-butenyl 4-diphosphate. The sequence is that of 4-hydroxy-3-methylbut-2-en-1-yl diphosphate synthase (flavodoxin) from Brucella melitensis biotype 2 (strain ATCC 23457).